A 726-amino-acid chain; its full sequence is Phenylalanine--tRNA ligase beta subunit (726 aa).

Residues 38-150 enclose the tRNA-binding domain; it reads FSSSKGLLFA…NFASLNDDAS (113 aa). Residues 394 to 467 form the B5 domain; the sequence is DKKVEINFDE…RFYNYDNFKE (74 aa). Residues D445, D451, E454, and E455 each coordinate Mg(2+).

The protein belongs to the phenylalanyl-tRNA synthetase beta subunit family. Type 1 subfamily. As to quaternary structure, tetramer of two alpha and two beta subunits. It depends on Mg(2+) as a cofactor.

The protein localises to the cytoplasm. It catalyses the reaction tRNA(Phe) + L-phenylalanine + ATP = L-phenylalanyl-tRNA(Phe) + AMP + diphosphate + H(+). In Mycoplasmopsis synoviae (strain 53) (Mycoplasma synoviae), this protein is Phenylalanine--tRNA ligase beta subunit.